A 257-amino-acid polypeptide reads, in one-letter code: NAD-capped RNA hydrolase NudC (257 aa).

Arg-69 provides a ligand contact to substrate. Cys-98 and Cys-101 together coordinate Zn(2+). Position 111 (Glu-111) interacts with substrate. Zn(2+) is bound by residues Cys-116 and Cys-119. Tyr-124 lines the substrate pocket. A Nudix hydrolase domain is found at 125 to 248 (PQIAPCIIVA…TVARRLIEDT (124 aa)). 3 residues coordinate a divalent metal cation: Ala-158, Glu-174, and Glu-178. A Nudix box motif is present at residues 159 to 180 (GFVEVGETLEQAVAREVMEESG). 192-199 (QPWPFPQS) is a binding site for substrate. A divalent metal cation is bound at residue Glu-219. Ala-241 is a binding site for substrate.

The protein belongs to the Nudix hydrolase family. NudC subfamily. Homodimer. It depends on Mg(2+) as a cofactor. Mn(2+) is required as a cofactor. Zn(2+) serves as cofactor.

It carries out the reaction a 5'-end NAD(+)-phospho-ribonucleoside in mRNA + H2O = a 5'-end phospho-adenosine-phospho-ribonucleoside in mRNA + beta-nicotinamide D-ribonucleotide + 2 H(+). The enzyme catalyses NAD(+) + H2O = beta-nicotinamide D-ribonucleotide + AMP + 2 H(+). The catalysed reaction is NADH + H2O = reduced beta-nicotinamide D-ribonucleotide + AMP + 2 H(+). In terms of biological role, mRNA decapping enzyme that specifically removes the nicotinamide adenine dinucleotide (NAD) cap from a subset of mRNAs by hydrolyzing the diphosphate linkage to produce nicotinamide mononucleotide (NMN) and 5' monophosphate mRNA. The NAD-cap is present at the 5'-end of some mRNAs and stabilizes RNA against 5'-processing. Has preference for mRNAs with a 5'-end purine. Catalyzes the hydrolysis of a broad range of dinucleotide pyrophosphates. The chain is NAD-capped RNA hydrolase NudC from Salmonella dublin (strain CT_02021853).